Reading from the N-terminus, the 257-residue chain is Glutamate racemase (257 aa).

Substrate contacts are provided by residues 12-13 (DS) and 44-45 (YG). Cysteine 75 acts as the Proton donor/acceptor in catalysis. A substrate-binding site is contributed by 76-77 (NT). Cysteine 185 (proton donor/acceptor) is an active-site residue. 186–187 (TH) contributes to the substrate binding site.

It belongs to the aspartate/glutamate racemases family.

The enzyme catalyses L-glutamate = D-glutamate. It participates in cell wall biogenesis; peptidoglycan biosynthesis. Provides the (R)-glutamate required for cell wall biosynthesis. The polypeptide is Glutamate racemase (Clostridium botulinum (strain Loch Maree / Type A3)).